Here is a 290-residue protein sequence, read N- to C-terminus: uncharacterized protein (290 aa).

The next 7 membrane-spanning stretches (helical) occupy residues 40–60, 80–100, 110–130, 139–159, 166–188, 200–220, and 238–260; these read MHVILLSALFYQIINILSPVI, DAHVVSSVQSIVLICLGYTCL, LFGYSVVAGDIYALTAGYFVW, VHITGIGFVIHAIAALFVITF, MYYGPTYLSWELSTPFLNIHYFL, MINGFILIVTFICVRIAWGWF, and WALSLFYLAANMSLNCLNLFWVS. The TLC domain maps to 74-271; it reads KTRLNWDAHV…MIDAIRRRAH (198 aa).

The protein resides in the endoplasmic reticulum membrane. This is an uncharacterized protein from Schizosaccharomyces pombe (strain 972 / ATCC 24843) (Fission yeast).